The chain runs to 182 residues: Putative pre-16S rRNA nuclease (182 aa).

It belongs to the YqgF nuclease family.

The protein resides in the cytoplasm. Its function is as follows. Could be a nuclease involved in processing of the 5'-end of pre-16S rRNA. This is Putative pre-16S rRNA nuclease from Corynebacterium aurimucosum (strain ATCC 700975 / DSM 44827 / CIP 107346 / CN-1) (Corynebacterium nigricans).